The primary structure comprises 225 residues: NAD(P)H-quinone oxidoreductase subunit K, chloroplastic (225 aa).

Residues cysteine 43, cysteine 44, cysteine 108, and cysteine 139 each coordinate [4Fe-4S] cluster.

It belongs to the complex I 20 kDa subunit family. In terms of assembly, NDH is composed of at least 16 different subunits, 5 of which are encoded in the nucleus. [4Fe-4S] cluster serves as cofactor.

The protein localises to the plastid. The protein resides in the chloroplast thylakoid membrane. The enzyme catalyses a plastoquinone + NADH + (n+1) H(+)(in) = a plastoquinol + NAD(+) + n H(+)(out). It carries out the reaction a plastoquinone + NADPH + (n+1) H(+)(in) = a plastoquinol + NADP(+) + n H(+)(out). Functionally, NDH shuttles electrons from NAD(P)H:plastoquinone, via FMN and iron-sulfur (Fe-S) centers, to quinones in the photosynthetic chain and possibly in a chloroplast respiratory chain. The immediate electron acceptor for the enzyme in this species is believed to be plastoquinone. Couples the redox reaction to proton translocation, and thus conserves the redox energy in a proton gradient. The chain is NAD(P)H-quinone oxidoreductase subunit K, chloroplastic from Atropa belladonna (Belladonna).